The primary structure comprises 161 residues: Cyclic pyranopterin monophosphate synthase (161 aa).

Substrate-binding positions include 75-77 (LCH) and 113-114 (ME). Asp-128 is a catalytic residue.

The protein belongs to the MoaC family. As to quaternary structure, homohexamer; trimer of dimers.

The enzyme catalyses (8S)-3',8-cyclo-7,8-dihydroguanosine 5'-triphosphate = cyclic pyranopterin phosphate + diphosphate. Its pathway is cofactor biosynthesis; molybdopterin biosynthesis. Functionally, catalyzes the conversion of (8S)-3',8-cyclo-7,8-dihydroguanosine 5'-triphosphate to cyclic pyranopterin monophosphate (cPMP). The chain is Cyclic pyranopterin monophosphate synthase from Salmonella typhi.